A 234-amino-acid polypeptide reads, in one-letter code: Transcription factor ILR3 (234 aa).

The segment at 34-85 (QPIGVSSNSSAGVDGSAGNSEASKEPGSKKRGRCESSSATSSKACREKQRRD) is disordered. Polar residues predominate over residues 36-54 (IGVSSNSSAGVDGSAGNSE). The 52-residue stretch at 71-122 (SATSSKACREKQRRDRLNDKFMELGAILEPGNPPKTDKAAILVDAVRMVTQL) folds into the bHLH domain.

Homodimer. Interacts with BTS and BHLH47/PYE. As to expression, widely expressed throughout development, mostly in vasculatures.

The protein resides in the nucleus. Functionally, transcription factor. Plays a role in resistance to amide-linked indole-3-acetic acid (IAA) conjugates such as IAA-Leu and IAA-Phe. May regulate gene expression in response to metal homeostasis changes. In Arabidopsis thaliana (Mouse-ear cress), this protein is Transcription factor ILR3 (ILR3).